The chain runs to 73 residues: Alpha-amylase inhibitor Paim-1 (73 aa).

Intrachain disulfides connect Cys8–Cys24 and Cys42–Cys70.

Functionally, inhibits mammalian alpha-amylases specifically but has no action on plant and microbial alpha-amylases. In Streptomyces olivaceoviridis (Streptomyces corchorusii), this protein is Alpha-amylase inhibitor Paim-1.